A 141-amino-acid polypeptide reads, in one-letter code: Nucleoside triphosphatase NudI (141 aa).

The Nudix hydrolase domain maps to 1–141 (MRQRTIVCPL…RVTLSQKGLL (141 aa)). The short motif at 38–59 (GGVEPVERIEEALRREIREELG) is the Nudix box element.

This sequence belongs to the Nudix hydrolase family. NudI subfamily. In terms of assembly, monomer. Mg(2+) serves as cofactor.

The enzyme catalyses a ribonucleoside 5'-triphosphate + H2O = a ribonucleoside 5'-phosphate + diphosphate + H(+). It carries out the reaction a 2'-deoxyribonucleoside 5'-triphosphate + H2O = a 2'-deoxyribonucleoside 5'-phosphate + diphosphate + H(+). It catalyses the reaction dUTP + H2O = dUMP + diphosphate + H(+). The catalysed reaction is dTTP + H2O = dTMP + diphosphate + H(+). The enzyme catalyses dCTP + H2O = dCMP + diphosphate + H(+). In terms of biological role, catalyzes the hydrolysis of nucleoside triphosphates, with a preference for pyrimidine deoxynucleoside triphosphates (dUTP, dTTP and dCTP). In Klebsiella pneumoniae (strain 342), this protein is Nucleoside triphosphatase NudI.